We begin with the raw amino-acid sequence, 369 residues long: Phenylalanine--tRNA ligase alpha subunit (369 aa).

Glutamate 269 contributes to the Mg(2+) binding site.

The protein belongs to the class-II aminoacyl-tRNA synthetase family. Phe-tRNA synthetase alpha subunit type 1 subfamily. As to quaternary structure, tetramer of two alpha and two beta subunits. Requires Mg(2+) as cofactor.

It localises to the cytoplasm. It carries out the reaction tRNA(Phe) + L-phenylalanine + ATP = L-phenylalanyl-tRNA(Phe) + AMP + diphosphate + H(+). This Brucella canis (strain ATCC 23365 / NCTC 10854 / RM-666) protein is Phenylalanine--tRNA ligase alpha subunit.